Reading from the N-terminus, the 307-residue chain is Peroxisomal protein PEX21 (307 aa).

A Glycyl cysteine thioester (Cys-Gly) (interchain with G-Cter in ubiquitin) cross-link involves residue C4. Residues 23 to 52 (VGRVGGFNRPSGGLGQSSAEQQLQARAGER) are disordered.

The protein belongs to the peroxin-21 family. Interacts with PEX7. Post-translationally, monoubiquitinated at Cys-4; acts as a signal for PEX21 extraction and is required for proper export from peroxisomes and recycling.

Its subcellular location is the cytoplasm. It localises to the cytosol. The protein localises to the peroxisome. Functionally, mediates peroxisomal import of proteins containing a C-terminal PTS2-type peroxisomal targeting signal via its interaction with PEX7. Interaction with PEX7 only takes place when PEX7 is associated with cargo proteins containing a PTS2 peroxisomal targeting signal. PEX7 along with PTS2-containing cargo proteins are then translocated through the PEX13-PEX14 docking complex together with PEX21. This is Peroxisomal protein PEX21 (PEX21) from Eremothecium gossypii (strain ATCC 10895 / CBS 109.51 / FGSC 9923 / NRRL Y-1056) (Yeast).